Reading from the N-terminus, the 508-residue chain is Flavonoid 3'-monooxygenase CYP75B137 (508 aa).

The helical transmembrane segment at 2 to 22 threads the bilayer; the sequence is LTFFFLWISTLLLSSFIVYLL. C445 serves as a coordination point for heme.

It belongs to the cytochrome P450 family. Heme serves as cofactor. In terms of tissue distribution, expressed in young cromes.

It is found in the membrane. The catalysed reaction is a 3'-unsubstituted flavone + reduced [NADPH--hemoprotein reductase] + O2 = a 3'-hydroxyflavone + oxidized [NADPH--hemoprotein reductase] + H2O + H(+). It catalyses the reaction (2S)-naringenin + reduced [NADPH--hemoprotein reductase] + O2 = (S)-eriodictyol + oxidized [NADPH--hemoprotein reductase] + H2O + H(+). It carries out the reaction (2R,3R)-dihydrokaempferol + reduced [NADPH--hemoprotein reductase] + O2 = (2R,3R)-dihydroquercetin + oxidized [NADPH--hemoprotein reductase] + H2O + H(+). The enzyme catalyses kaempferol + reduced [NADPH--hemoprotein reductase] + O2 = quercetin + oxidized [NADPH--hemoprotein reductase] + H2O + H(+). It participates in flavonoid metabolism. Flavonoid 3'-hydroxylase that catalyzes the 3'-hydroxylation of flavanones, dihydroflavonols and flavonols. Converts narigenin to eriodictyol, dihydrokaempferol to dihydroquercetin and kaempferol to quercetin. This Crocosmia x crocosmiiflora (Montbretia) protein is Flavonoid 3'-monooxygenase CYP75B137.